The following is a 101-amino-acid chain: Ribonuclease P protein component 1 (101 aa).

This sequence belongs to the eukaryotic/archaeal RNase P protein component 1 family. Consists of a catalytic RNA component and at least 4-5 protein subunits.

It localises to the cytoplasm. It catalyses the reaction Endonucleolytic cleavage of RNA, removing 5'-extranucleotides from tRNA precursor.. Part of ribonuclease P, a protein complex that generates mature tRNA molecules by cleaving their 5'-ends. The protein is Ribonuclease P protein component 1 of Methanococcoides burtonii (strain DSM 6242 / NBRC 107633 / OCM 468 / ACE-M).